A 179-amino-acid polypeptide reads, in one-letter code: Centromere protein R (179 aa).

A disordered region spans residues 1–79 (MSAKRSLKLD…RLSRRGQPQT (79 aa)). Polar residues predominate over residues 30 to 50 (NSYSPTTGTCQISPFSSPTSH). The segment covering 51–64 (NAEDLRNGLSHGDE) has biased composition (basic and acidic residues). Positions 172–176 (LQLLL) match the LXXLL motif motif.

It localises to the nucleus. It is found in the chromosome. The protein localises to the centromere. The protein resides in the kinetochore. In terms of biological role, transcription coregulator that can have both coactivator and corepressor functions. Involved in the coactivation of nuclear receptors for retinoid X (RXRs) and thyroid hormone (TRs) in a ligand-dependent fashion. Probable component of a centromeric complex involved in assembly of kinetochore proteins, mitotic progression and chromosome segregation. The polypeptide is Centromere protein R (CENPR) (Gallus gallus (Chicken)).